Here is a 285-residue protein sequence, read N- to C-terminus: Putative hydrolase DDAH2 (285 aa).

The active-site Proton donor is the His-171. Cys-276 acts as the Nucleophile in catalysis.

This sequence belongs to the DDAH family. Phosphorylated by TBK1. Phosphorylation inhibits the translocation into the mitochondrion upon Sendai viral infection. As to expression, detected in heart, placenta, lung, liver, skeletal muscle, kidney and pancreas, and at very low levels in brain.

Its subcellular location is the cytoplasm. It is found in the mitochondrion. Its function is as follows. Putative hydrolase with unknown substrate. Does not hydrolyze N(G),N(G)-dimethyl-L-arginine (ADMA) which acts as an inhibitor of NOS. In endothelial cells, induces expression of vascular endothelial growth factor (VEGF) via phosphorylation of the transcription factor SP1 by PKA in a process that is independent of NO and NO synthase. Similarly, enhances pancreatic insulin secretion through SP1-mediated transcriptional up-regulation of secretagogin/SCGN, an insulin vesicle docking protein. Upon viral infection, relocates to mitochondria where it promotes mitochondrial fission through activation of DNM1L leading to the inhibition of innate response activation mediated by MAVS. This Homo sapiens (Human) protein is Putative hydrolase DDAH2.